Consider the following 269-residue polypeptide: Protein MGF 110-1L (269 aa).

Residue M1 is a topological domain, cytoplasmic. The A repeat unit spans residues 1-145 (MLGLQIFTLL…YVRKRSLQTV (145 aa)). Residues 2–18 (LGLQIFTLLSIPTLLYT) traverse the membrane as a helical segment. At 19 to 116 (YELELLDLTR…HEWHEAVIRK (98 aa)) the chain is on the extracellular side. N75 carries an N-linked (GlcNAc...) asparagine; by host glycan. The helical transmembrane segment at 117 to 137 (WQKLLTYGFYLVGCVLVANYV) threads the bilayer. Residues 138–144 (RKRSLQT) are Cytoplasmic-facing. A helical transmembrane segment spans residues 145-165 (VMYLLVLLVIFFLLSQLMLYR). Residues 147-269 (YLLVLLVIFF…DNLMKKQDMM (123 aa)) form a B repeat. Residues 166-269 (ELEDKKHKIG…DNLMKKQDMM (104 aa)) lie on the Extracellular side of the membrane.

Belongs to the asfivirus MGF 110 family.

It localises to the host membrane. Its function is as follows. Plays a role in virus cell tropism, and may be required for efficient virus replication in macrophages. The chain is Protein MGF 110-1L from African swine fever virus (isolate Tick/South Africa/Pretoriuskop Pr4/1996) (ASFV).